The primary structure comprises 164 residues: Protein SprT (164 aa).

A SprT-like domain is found at 13-156; it reads YQQAEAFFKR…LCKRCREILV (144 aa). Residue H69 coordinates Zn(2+). E70 is an active-site residue. H73 provides a ligand contact to Zn(2+).

It belongs to the SprT family. Zn(2+) is required as a cofactor.

It localises to the cytoplasm. This Pseudomonas putida (strain ATCC 700007 / DSM 6899 / JCM 31910 / BCRC 17059 / LMG 24140 / F1) protein is Protein SprT.